The following is a 260-amino-acid chain: Dynein regulatory complex subunit 6 (260 aa).

Residues 1–13 (MAPKKKGGGKKKK) show a composition bias toward basic residues. The tract at residues 1–43 (MAPKKKGGGKKKKKDDGAEPPHDGSWERAVESGTWEKPVTDLP) is disordered. Positions 14–30 (KDDGAEPPHDGSWERAV) are enriched in basic and acidic residues.

This sequence belongs to the DRC6 family. In terms of assembly, component of the nexin-dynein regulatory complex (N-DRC).

The protein localises to the cytoplasm. The protein resides in the cytoskeleton. It localises to the flagellum axoneme. Functionally, component of the nexin-dynein regulatory complex (N-DRC), a key regulator of ciliary/flagellar motility which maintains the alignment and integrity of the distal axoneme and regulates microtubule sliding in motile axonemes. The polypeptide is Dynein regulatory complex subunit 6 (Chlamydomonas reinhardtii (Chlamydomonas smithii)).